The primary structure comprises 300 residues: Tumor necrosis factor receptor superfamily member 6B (300 aa).

An N-terminal signal peptide occupies residues 1–29; sequence MRALEGPGLSLLCLVLALPALLPVPAVRG. TNFR-Cys repeat units lie at residues 31–70, 72–113, 115–150, and 152–193; these read AETPTYPWRDAETGERLVCAQCPPGTFVQRPCRRDSPTTC, PCPP…NRAC, CRTGFFAHAGFCLEHASCPPGAGVIAPGTPSQNTQC, and PCPP…DTLC. 8 disulfide bridges follow: C49-C62, C52-C70, C73-C88, C91-C105, C95-C113, C115-C126, C132-C150, and C153-C168. A glycan (N-linked (GlcNAc...) asparagine) is linked at N173. C174 and C193 form a disulfide bridge.

As to expression, detected in fetal lung, brain and liver. Detected in adult stomach, spinal cord, lymph node, trachea, spleen, colon and lung. Highly expressed in several primary tumors from colon, stomach, rectum, esophagus and in SW480 colon carcinoma cells.

The protein resides in the secreted. Functionally, decoy receptor that can neutralize the cytotoxic ligands TNFS14/LIGHT, TNFSF15 and TNFSF6/FASL. Protects against apoptosis. In Homo sapiens (Human), this protein is Tumor necrosis factor receptor superfamily member 6B (TNFRSF6B).